Reading from the N-terminus, the 405-residue chain is Tyrosine--tRNA ligase (405 aa).

Positions 41 to 50 (PTAPDLHLGH) match the 'HIGH' region motif. A 'KMSKS' region motif is present at residues 225 to 229 (KMSKS). Lys-228 serves as a coordination point for ATP. An S4 RNA-binding domain is found at 342–404 (EPLLVWVLSK…GKKGKFLKII (63 aa)).

The protein belongs to the class-I aminoacyl-tRNA synthetase family. TyrS type 2 subfamily. Homodimer.

The protein resides in the cytoplasm. It catalyses the reaction tRNA(Tyr) + L-tyrosine + ATP = L-tyrosyl-tRNA(Tyr) + AMP + diphosphate + H(+). In terms of biological role, catalyzes the attachment of tyrosine to tRNA(Tyr) in a two-step reaction: tyrosine is first activated by ATP to form Tyr-AMP and then transferred to the acceptor end of tRNA(Tyr). The protein is Tyrosine--tRNA ligase of Leptospira interrogans serogroup Icterohaemorrhagiae serovar Lai (strain 56601).